The chain runs to 183 residues: UPF0200 protein Memar_1556 (183 aa).

8–15 (GMPASGKG) provides a ligand contact to ATP.

This sequence belongs to the UPF0200 family.

The protein is UPF0200 protein Memar_1556 of Methanoculleus marisnigri (strain ATCC 35101 / DSM 1498 / JR1).